A 240-amino-acid chain; its full sequence is 1-(5-phosphoribosyl)-5-[(5-phosphoribosylamino)methylideneamino] imidazole-4-carboxamide isomerase (240 aa).

D8 functions as the Proton acceptor in the catalytic mechanism. D129 serves as the catalytic Proton donor.

The protein belongs to the HisA/HisF family.

It localises to the cytoplasm. It catalyses the reaction 1-(5-phospho-beta-D-ribosyl)-5-[(5-phospho-beta-D-ribosylamino)methylideneamino]imidazole-4-carboxamide = 5-[(5-phospho-1-deoxy-D-ribulos-1-ylimino)methylamino]-1-(5-phospho-beta-D-ribosyl)imidazole-4-carboxamide. Its pathway is amino-acid biosynthesis; L-histidine biosynthesis; L-histidine from 5-phospho-alpha-D-ribose 1-diphosphate: step 4/9. The chain is 1-(5-phosphoribosyl)-5-[(5-phosphoribosylamino)methylideneamino] imidazole-4-carboxamide isomerase from Caldanaerobacter subterraneus subsp. tengcongensis (strain DSM 15242 / JCM 11007 / NBRC 100824 / MB4) (Thermoanaerobacter tengcongensis).